A 273-amino-acid chain; its full sequence is MRFLVLTGLSGAGKTTARGFLEDLGYFMVDNLPPRLWPPLLQEAAARGLARVGVVVDARALAFFQDLEEVLEALRPTVVYLEARPEVLLRRYNLTRRVHPLGAGNLMREIAEERRALAGLRGRAHLVVDTSELSPRGLKEALARFLGEEGGFLLRLVSFGFKWGPPQEADLVLDVRPLPNPHYDPALRPRTGLDPEVRRYVFSEAAEPYYRALLAVAGLAAEGARAEGRAFYTVAVGCTGGRHRSVAVAERLAEELSGRFAVEVVHRDVEREG.

An ATP-binding site is contributed by G8–T15. D57–A60 is a binding site for GTP.

This sequence belongs to the RapZ-like family.

Displays ATPase and GTPase activities. The protein is Nucleotide-binding protein TT_C1664 of Thermus thermophilus (strain ATCC BAA-163 / DSM 7039 / HB27).